Reading from the N-terminus, the 364-residue chain is Fructose-1,6-bisphosphatase class 1 1 (364 aa).

Positions 99, 121, 123, and 124 each coordinate Mg(2+). Residues 124–127 (DGSS) and Asn-220 each bind substrate. Glu-292 serves as a coordination point for Mg(2+).

The protein belongs to the FBPase class 1 family. As to quaternary structure, homotetramer. Requires Mg(2+) as cofactor.

It localises to the cytoplasm. It catalyses the reaction beta-D-fructose 1,6-bisphosphate + H2O = beta-D-fructose 6-phosphate + phosphate. The protein operates within carbohydrate biosynthesis; gluconeogenesis. This Albidiferax ferrireducens (strain ATCC BAA-621 / DSM 15236 / T118) (Rhodoferax ferrireducens) protein is Fructose-1,6-bisphosphatase class 1 1.